The chain runs to 237 residues: 2,3-bisphosphoglycerate-dependent phosphoglycerate mutase (237 aa).

Substrate is bound by residues 8 to 15, 21 to 22, arginine 60, 87 to 90, lysine 98, 114 to 115, and 180 to 181; these read RHGQSQWN, TG, ERHY, RR, and GN. Histidine 9 serves as the catalytic Tele-phosphohistidine intermediate. Residue glutamate 87 is the Proton donor/acceptor of the active site.

The protein belongs to the phosphoglycerate mutase family. BPG-dependent PGAM subfamily. In terms of assembly, homodimer.

It carries out the reaction (2R)-2-phosphoglycerate = (2R)-3-phosphoglycerate. Its pathway is carbohydrate degradation; glycolysis; pyruvate from D-glyceraldehyde 3-phosphate: step 3/5. Catalyzes the interconversion of 2-phosphoglycerate and 3-phosphoglycerate. In Caulobacter vibrioides (strain ATCC 19089 / CIP 103742 / CB 15) (Caulobacter crescentus), this protein is 2,3-bisphosphoglycerate-dependent phosphoglycerate mutase.